The primary structure comprises 509 residues: Protein disulfide-isomerase (509 aa).

Residues 1–19 (MLSRSLLCLALAWVARVGA) form the signal peptide. One can recognise a Thioredoxin 1 domain in the interval 20–136 (DAPEEEDNVL…IVNWLKKRTG (117 aa)). Residues Cys-55 and Cys-58 each act as nucleophile in the active site. A disulfide bond links Cys-55 and Cys-58. The residue at position 202 (Lys-202) is an N6-acetyllysine. An N6-succinyllysine mark is found at Lys-224 and Lys-273. 2 positions are modified to phosphoserine: Ser-333 and Ser-359. One can recognise a Thioredoxin 2 domain in the interval 335 to 477 (ELTAEKITEF…FKKFLESGGQ (143 aa)). Catalysis depends on nucleophile residues Cys-399 and Cys-402. Cys-399 and Cys-402 are disulfide-bonded. A Phosphoserine modification is found at Ser-429. Residues 473–509 (ESGGQDGAGDDDDVDLEEALEPDMEEDDDQKAVKDEL) are disordered. The span at 480-501 (AGDDDDVDLEEALEPDMEEDDD) shows a compositional bias: acidic residues. A Prevents secretion from ER motif is present at residues 506 to 509 (KDEL).

The protein belongs to the protein disulfide isomerase family. In terms of assembly, heterodimer; heterodimerizes with the protein microsomal triglyceride transfer MTTP. Homodimer. Homodimer. Monomers and homotetramers may also occur. Interacts with P4HA2, forming a heterotetramer consisting of 2 alpha subunits (P4HA2) and 2 beta (P4HB), where P4HB plays the role of a structural subunit; this tetramer catalyzes the formation of 4-hydroxyproline in collagen. Also constitutes the structural subunit of the microsomal triacylglycerol transfer protein MTTP in mammalian cells. Stabilizes both enzymes and retain them in the ER without contributing to the catalytic activity. Binds UBQLN1. Interacts with ERO1B. Interacts with ILDR2. Interacts with ERN1/IRE1A (via N-terminus); the interaction is enhanced by phosphorylation of P4HB by FAM20C in response to endoplasmic reticulum stress and results in attenuation of ERN1 activity. In terms of processing, phosphorylation of Ser-359 by FAM20C is induced by endoplasmic reticulum stress and results in a functional switch from oxidoreductase to molecular chaperone. It also promotes interaction with ERN1.

Its subcellular location is the endoplasmic reticulum. It localises to the endoplasmic reticulum lumen. The protein localises to the melanosome. The protein resides in the cell membrane. The catalysed reaction is Catalyzes the rearrangement of -S-S- bonds in proteins.. Its function is as follows. This multifunctional protein catalyzes the formation, breakage and rearrangement of disulfide bonds. At the cell surface, seems to act as a reductase that cleaves disulfide bonds of proteins attached to the cell. May therefore cause structural modifications of exofacial proteins. Inside the cell, seems to form/rearrange disulfide bonds of nascent proteins. At high concentrations and following phosphorylation by FAM20C, functions as a chaperone that inhibits aggregation of misfolded proteins. At low concentrations, facilitates aggregation (anti-chaperone activity). May be involved with other chaperones in the structural modification of the TG precursor in hormone biogenesis. Also acts as a structural subunit of various enzymes such as prolyl 4-hydroxylase and microsomal triacylglycerol transfer protein MTTP. Receptor for LGALS9; the interaction retains P4HB at the cell surface of Th2 T helper cells, increasing disulfide reductase activity at the plasma membrane, altering the plasma membrane redox state and enhancing cell migration. The protein is Protein disulfide-isomerase (P4HB) of Cricetulus griseus (Chinese hamster).